The chain runs to 338 residues: Lipoate-protein ligase A (338 aa).

The BPL/LPL catalytic domain maps to 29–216; that stretch reads PATQRVLFLW…AFFAHYGERV (188 aa). ATP is bound by residues arginine 71, 76–79, and lysine 134; that span reads GAVF. Lysine 134 contacts (R)-lipoate.

This sequence belongs to the LplA family. As to quaternary structure, monomer.

It localises to the cytoplasm. It catalyses the reaction L-lysyl-[lipoyl-carrier protein] + (R)-lipoate + ATP = N(6)-[(R)-lipoyl]-L-lysyl-[lipoyl-carrier protein] + AMP + diphosphate + H(+). It participates in protein modification; protein lipoylation via exogenous pathway; protein N(6)-(lipoyl)lysine from lipoate: step 1/2. The protein operates within protein modification; protein lipoylation via exogenous pathway; protein N(6)-(lipoyl)lysine from lipoate: step 2/2. Functionally, catalyzes both the ATP-dependent activation of exogenously supplied lipoate to lipoyl-AMP and the transfer of the activated lipoyl onto the lipoyl domains of lipoate-dependent enzymes. The polypeptide is Lipoate-protein ligase A (Escherichia coli (strain SMS-3-5 / SECEC)).